The primary structure comprises 77 residues: Translation initiation factor IF-1, chloroplastic (77 aa).

The region spanning 1-71 is the S1-like domain; sequence MKEQKWIHEG…TRGRIIYRLR (71 aa).

The protein belongs to the IF-1 family. In terms of assembly, component of the 30S ribosomal translation pre-initiation complex which assembles on the 30S ribosome in the order IF-2 and IF-3, IF-1 and N-formylmethionyl-tRNA(fMet); mRNA recruitment can occur at any time during PIC assembly.

Its subcellular location is the plastid. The protein resides in the chloroplast. In terms of biological role, one of the essential components for the initiation of protein synthesis. Stabilizes the binding of IF-2 and IF-3 on the 30S subunit to which N-formylmethionyl-tRNA(fMet) subsequently binds. Helps modulate mRNA selection, yielding the 30S pre-initiation complex (PIC). Upon addition of the 50S ribosomal subunit IF-1, IF-2 and IF-3 are released leaving the mature 70S translation initiation complex. The chain is Translation initiation factor IF-1, chloroplastic from Daucus carota (Wild carrot).